Consider the following 432-residue polypeptide: Asparagine--tRNA ligase (432 aa).

This sequence belongs to the class-II aminoacyl-tRNA synthetase family. Homodimer.

The protein localises to the cytoplasm. It catalyses the reaction tRNA(Asn) + L-asparagine + ATP = L-asparaginyl-tRNA(Asn) + AMP + diphosphate + H(+). The protein is Asparagine--tRNA ligase of Lacticaseibacillus paracasei (strain ATCC 334 / BCRC 17002 / CCUG 31169 / CIP 107868 / KCTC 3260 / NRRL B-441) (Lactobacillus paracasei).